The chain runs to 308 residues: Ornithine carbamoyltransferase (308 aa).

Carbamoyl phosphate-binding positions include 57-60 (STRT), Gln84, Arg108, and 135-138 (HPCQ). L-ornithine contacts are provided by residues Asn166, Asp224, and 228–229 (SM). Residues 264–265 (CL) and Arg292 contribute to the carbamoyl phosphate site.

It belongs to the aspartate/ornithine carbamoyltransferase superfamily. OTCase family.

It localises to the cytoplasm. The enzyme catalyses carbamoyl phosphate + L-ornithine = L-citrulline + phosphate + H(+). The protein operates within amino-acid biosynthesis; L-arginine biosynthesis; L-arginine from L-ornithine and carbamoyl phosphate: step 1/3. Its function is as follows. Reversibly catalyzes the transfer of the carbamoyl group from carbamoyl phosphate (CP) to the N(epsilon) atom of ornithine (ORN) to produce L-citrulline. In Ralstonia nicotianae (strain ATCC BAA-1114 / GMI1000) (Ralstonia solanacearum), this protein is Ornithine carbamoyltransferase.